The primary structure comprises 423 residues: Protein CLP1 homolog (423 aa).

Residues Glu-16, Lys-57, and 119 to 124 (DVGKST) contribute to the ATP site.

This sequence belongs to the Clp1 family. Clp1 subfamily.

It localises to the nucleus. Functionally, required for endonucleolytic cleavage during polyadenylation-dependent pre-mRNA 3'-end formation. This is Protein CLP1 homolog (cbc) from Drosophila yakuba (Fruit fly).